Reading from the N-terminus, the 129-residue chain is Small ribosomal subunit protein uS11 (129 aa).

Belongs to the universal ribosomal protein uS11 family. As to quaternary structure, part of the 30S ribosomal subunit. Interacts with proteins S7 and S18. Binds to IF-3.

In terms of biological role, located on the platform of the 30S subunit, it bridges several disparate RNA helices of the 16S rRNA. Forms part of the Shine-Dalgarno cleft in the 70S ribosome. This Enterococcus faecalis (strain ATCC 700802 / V583) protein is Small ribosomal subunit protein uS11.